The sequence spans 282 residues: Aldo-keto reductase BQ2027_MB2996 (282 aa).

Tyr-57 (proton donor) is an active-site residue. Leu-197, Val-235, Arg-237, Ser-238, Ala-239, Arg-243, Ser-246, Asn-247, and Arg-273 together coordinate NADPH.

Belongs to the aldo/keto reductase family.

The polypeptide is Aldo-keto reductase BQ2027_MB2996 (Mycobacterium bovis (strain ATCC BAA-935 / AF2122/97)).